Here is a 390-residue protein sequence, read N- to C-terminus: Stearoyl-[acyl-carrier-protein] 9-desaturase, chloroplastic (390 aa).

Residues 1 to 27 constitute a chloroplast transit peptide; it reads MALKLCFPPHKMPSFPDARIRSHRVFM. Fe cation-binding residues include Glu132, Glu170, His173, Glu223, Glu256, and His259.

Belongs to the fatty acid desaturase type 2 family. As to quaternary structure, homodimer. The cofactor is Fe(2+).

It localises to the plastid. The protein resides in the chloroplast. It catalyses the reaction octadecanoyl-[ACP] + 2 reduced [2Fe-2S]-[ferredoxin] + O2 + 2 H(+) = (9Z)-octadecenoyl-[ACP] + 2 oxidized [2Fe-2S]-[ferredoxin] + 2 H2O. The protein operates within lipid metabolism; fatty acid metabolism. Converts stearoyl-ACP to oleoyl-ACP by introduction of a cis double bond between carbons 9 and 10 of the acyl chain. The polypeptide is Stearoyl-[acyl-carrier-protein] 9-desaturase, chloroplastic (Olea europaea (Common olive)).